Here is a 116-residue protein sequence, read N- to C-terminus: Large ribosomal subunit protein bL20c (116 aa).

This sequence belongs to the bacterial ribosomal protein bL20 family.

It localises to the plastid. The protein resides in the chloroplast. Binds directly to 23S ribosomal RNA and is necessary for the in vitro assembly process of the 50S ribosomal subunit. It is not involved in the protein synthesizing functions of that subunit. This is Large ribosomal subunit protein bL20c (rpl20) from Marchantia polymorpha (Common liverwort).